A 184-amino-acid polypeptide reads, in one-letter code: ATP synthase subunit b, chloroplastic (184 aa).

The helical transmembrane segment at 27 to 49 (FATNPINLSVVLGVLIFFGKGVL) threads the bilayer.

The protein belongs to the ATPase B chain family. In terms of assembly, F-type ATPases have 2 components, F(1) - the catalytic core - and F(0) - the membrane proton channel. F(1) has five subunits: alpha(3), beta(3), gamma(1), delta(1), epsilon(1). F(0) has four main subunits: a(1), b(1), b'(1) and c(10-14). The alpha and beta chains form an alternating ring which encloses part of the gamma chain. F(1) is attached to F(0) by a central stalk formed by the gamma and epsilon chains, while a peripheral stalk is formed by the delta, b and b' chains.

Its subcellular location is the plastid. The protein resides in the chloroplast thylakoid membrane. In terms of biological role, f(1)F(0) ATP synthase produces ATP from ADP in the presence of a proton or sodium gradient. F-type ATPases consist of two structural domains, F(1) containing the extramembraneous catalytic core and F(0) containing the membrane proton channel, linked together by a central stalk and a peripheral stalk. During catalysis, ATP synthesis in the catalytic domain of F(1) is coupled via a rotary mechanism of the central stalk subunits to proton translocation. Component of the F(0) channel, it forms part of the peripheral stalk, linking F(1) to F(0). This chain is ATP synthase subunit b, chloroplastic, found in Ipomoea purpurea (Common morning glory).